Consider the following 394-residue polypeptide: Chalcone synthase 2 (394 aa).

Cys-167 is an active-site residue.

Belongs to the thiolase-like superfamily. Chalcone/stilbene synthases family.

The catalysed reaction is (E)-4-coumaroyl-CoA + 3 malonyl-CoA + 3 H(+) = 2',4,4',6'-tetrahydroxychalcone + 3 CO2 + 4 CoA. It functions in the pathway secondary metabolite biosynthesis; flavonoid biosynthesis. Its function is as follows. The primary product of this enzyme is 4,2',4',6'-tetrahydroxychalcone (also termed naringenin-chalcone or chalcone) which can under specific conditions spontaneously isomerize into naringenin. This is Chalcone synthase 2 (CHS2) from Secale cereale (Rye).